Here is a 319-residue protein sequence, read N- to C-terminus: ATP-dependent 6-phosphofructokinase (319 aa).

Glycine 11 lines the ATP pocket. An ADP-binding site is contributed by 21-25; sequence RAVVR. ATP is bound by residues 72 to 73 and 102 to 105; these read RC and GDGS. Aspartate 103 is a binding site for Mg(2+). Residue 125-127 coordinates substrate; the sequence is TID. The Proton acceptor role is filled by aspartate 127. Arginine 154 serves as a coordination point for ADP. Residues arginine 162 and 169 to 171 contribute to the substrate site; that span reads MGR. ADP contacts are provided by residues 185–187, arginine 211, and 213–215; these read GAE and KRH. Substrate-binding positions include glutamate 222, arginine 243, and 249 to 252; that span reads HVQR.

The protein belongs to the phosphofructokinase type A (PFKA) family. ATP-dependent PFK group I subfamily. Prokaryotic clade 'B1' sub-subfamily. In terms of assembly, homotetramer. Mg(2+) is required as a cofactor.

The protein localises to the cytoplasm. The enzyme catalyses beta-D-fructose 6-phosphate + ATP = beta-D-fructose 1,6-bisphosphate + ADP + H(+). It functions in the pathway carbohydrate degradation; glycolysis; D-glyceraldehyde 3-phosphate and glycerone phosphate from D-glucose: step 3/4. Allosterically activated by ADP and other diphosphonucleosides, and allosterically inhibited by phosphoenolpyruvate. Catalyzes the phosphorylation of D-fructose 6-phosphate to fructose 1,6-bisphosphate by ATP, the first committing step of glycolysis. In Clostridioides difficile (strain 630) (Peptoclostridium difficile), this protein is ATP-dependent 6-phosphofructokinase.